The primary structure comprises 109 residues: Small ribosomal subunit protein eS25 (109 aa).

Basic and acidic residues predominate over residues 1–13 (MVKKIQESKEKKA). Positions 1-34 (MVKKIQESKEKKALKAASGTRKDKKKWGDGRKKE) are disordered.

It belongs to the eukaryotic ribosomal protein eS25 family.

The sequence is that of Small ribosomal subunit protein eS25 (RPS25-1) from Encephalitozoon cuniculi (strain GB-M1) (Microsporidian parasite).